The sequence spans 233 residues: Phosphoribosylformylglycinamidine synthase subunit PurQ (233 aa).

Residues 3 to 233 form the Glutamine amidotransferase type-1 domain; sequence SAILVFPGIN…GLVAHLERAA (231 aa). The Nucleophile role is filled by C87. Active-site residues include H204 and E206.

In terms of assembly, part of the FGAM synthase complex composed of 1 PurL, 1 PurQ and 2 PurS subunits.

It localises to the cytoplasm. It catalyses the reaction N(2)-formyl-N(1)-(5-phospho-beta-D-ribosyl)glycinamide + L-glutamine + ATP + H2O = 2-formamido-N(1)-(5-O-phospho-beta-D-ribosyl)acetamidine + L-glutamate + ADP + phosphate + H(+). The enzyme catalyses L-glutamine + H2O = L-glutamate + NH4(+). It functions in the pathway purine metabolism; IMP biosynthesis via de novo pathway; 5-amino-1-(5-phospho-D-ribosyl)imidazole from N(2)-formyl-N(1)-(5-phospho-D-ribosyl)glycinamide: step 1/2. Functionally, part of the phosphoribosylformylglycinamidine synthase complex involved in the purines biosynthetic pathway. Catalyzes the ATP-dependent conversion of formylglycinamide ribonucleotide (FGAR) and glutamine to yield formylglycinamidine ribonucleotide (FGAM) and glutamate. The FGAM synthase complex is composed of three subunits. PurQ produces an ammonia molecule by converting glutamine to glutamate. PurL transfers the ammonia molecule to FGAR to form FGAM in an ATP-dependent manner. PurS interacts with PurQ and PurL and is thought to assist in the transfer of the ammonia molecule from PurQ to PurL. This Nitrobacter hamburgensis (strain DSM 10229 / NCIMB 13809 / X14) protein is Phosphoribosylformylglycinamidine synthase subunit PurQ.